Reading from the N-terminus, the 184-residue chain is Putative rRNA methyltransferase YlbH (184 aa).

The disordered stretch occupies residues 1-22 (MRVISGSKKGRSLKAVAGTSTR).

It belongs to the methyltransferase superfamily. RsmD family.

Functionally, may catalyze the S-adenosyl-L-methionine-dependent methylation of a specific base in rRNA. The polypeptide is Putative rRNA methyltransferase YlbH (ylbH) (Bacillus subtilis (strain 168)).